A 487-amino-acid chain; its full sequence is Glutamyl-tRNA(Gln) amidotransferase subunit A (487 aa).

Active-site charge relay system residues include Lys80 and Ser155. Ser179 functions as the Acyl-ester intermediate in the catalytic mechanism.

The protein belongs to the amidase family. GatA subfamily. As to quaternary structure, heterotrimer of A, B and C subunits.

The catalysed reaction is L-glutamyl-tRNA(Gln) + L-glutamine + ATP + H2O = L-glutaminyl-tRNA(Gln) + L-glutamate + ADP + phosphate + H(+). Allows the formation of correctly charged Gln-tRNA(Gln) through the transamidation of misacylated Glu-tRNA(Gln) in organisms which lack glutaminyl-tRNA synthetase. The reaction takes place in the presence of glutamine and ATP through an activated gamma-phospho-Glu-tRNA(Gln). The protein is Glutamyl-tRNA(Gln) amidotransferase subunit A of Leptospira interrogans serogroup Icterohaemorrhagiae serovar Lai (strain 56601).